The following is a 631-amino-acid chain: 1-deoxy-D-xylulose-5-phosphate synthase (631 aa).

Residues H72 and 113-115 (GHA) contribute to the thiamine diphosphate site. Position 144 (D144) interacts with Mg(2+). Thiamine diphosphate-binding positions include 145–146 (GA), N174, Y287, and E370. N174 contributes to the Mg(2+) binding site.

It belongs to the transketolase family. DXPS subfamily. As to quaternary structure, homodimer. The cofactor is Mg(2+). Thiamine diphosphate is required as a cofactor.

It catalyses the reaction D-glyceraldehyde 3-phosphate + pyruvate + H(+) = 1-deoxy-D-xylulose 5-phosphate + CO2. It functions in the pathway metabolic intermediate biosynthesis; 1-deoxy-D-xylulose 5-phosphate biosynthesis; 1-deoxy-D-xylulose 5-phosphate from D-glyceraldehyde 3-phosphate and pyruvate: step 1/1. Functionally, catalyzes the acyloin condensation reaction between C atoms 2 and 3 of pyruvate and glyceraldehyde 3-phosphate to yield 1-deoxy-D-xylulose-5-phosphate (DXP). The chain is 1-deoxy-D-xylulose-5-phosphate synthase from Prochlorococcus marinus (strain MIT 9515).